The chain runs to 429 residues: GTPase Obg (429 aa).

The 158-residue stretch at 1–158 (MLIDKCTLFL…IEAQFELKYI (158 aa)) folds into the Obg domain. The OBG-type G domain maps to 159-330 (ADVGLLGLPN…LLKDIFKDYK (172 aa)). Residues 165 to 172 (GLPNAGKS), 190 to 194 (FTTLS), 211 to 214 (DIPG), 281 to 284 (NKID), and 311 to 313 (SGF) contribute to the GTP site. Residues S172 and T192 each coordinate Mg(2+). The OCT domain maps to 351–429 (KVEKEQEDIV…RIQDVMFEIN (79 aa)).

This sequence belongs to the TRAFAC class OBG-HflX-like GTPase superfamily. OBG GTPase family. Monomer. Mg(2+) serves as cofactor.

It localises to the cytoplasm. Functionally, an essential GTPase which binds GTP, GDP and possibly (p)ppGpp with moderate affinity, with high nucleotide exchange rates and a fairly low GTP hydrolysis rate. Plays a role in control of the cell cycle, stress response, ribosome biogenesis and in those bacteria that undergo differentiation, in morphogenesis control. The sequence is that of GTPase Obg from Malacoplasma penetrans (strain HF-2) (Mycoplasma penetrans).